Reading from the N-terminus, the 876-residue chain is Leucine--tRNA ligase (876 aa).

A 'HIGH' region motif is present at residues 43–53 (PYPSGRIHMGH). A 'KMSKS' region motif is present at residues 632-636 (KMSKS). Residue lysine 635 coordinates ATP.

It belongs to the class-I aminoacyl-tRNA synthetase family.

Its subcellular location is the cytoplasm. It catalyses the reaction tRNA(Leu) + L-leucine + ATP = L-leucyl-tRNA(Leu) + AMP + diphosphate. This is Leucine--tRNA ligase from Rhizobium etli (strain ATCC 51251 / DSM 11541 / JCM 21823 / NBRC 15573 / CFN 42).